Consider the following 91-residue polypeptide: Large ribosomal subunit protein uL29 (91 aa).

The interval 67–91 (AAPLAESSAPAKTKSRARKSKKEAL) is disordered. Over residues 79–91 (TKSRARKSKKEAL) the composition is skewed to basic residues.

It belongs to the universal ribosomal protein uL29 family.

In Acidobacterium capsulatum (strain ATCC 51196 / DSM 11244 / BCRC 80197 / JCM 7670 / NBRC 15755 / NCIMB 13165 / 161), this protein is Large ribosomal subunit protein uL29.